We begin with the raw amino-acid sequence, 513 residues long: ATP synthase subunit alpha (513 aa).

169–176 (GDRQTGKT) provides a ligand contact to ATP.

The protein belongs to the ATPase alpha/beta chains family. F-type ATPases have 2 components, CF(1) - the catalytic core - and CF(0) - the membrane proton channel. CF(1) has five subunits: alpha(3), beta(3), gamma(1), delta(1), epsilon(1). CF(0) has three main subunits: a(1), b(2) and c(9-12). The alpha and beta chains form an alternating ring which encloses part of the gamma chain. CF(1) is attached to CF(0) by a central stalk formed by the gamma and epsilon chains, while a peripheral stalk is formed by the delta and b chains.

The protein localises to the cell inner membrane. It carries out the reaction ATP + H2O + 4 H(+)(in) = ADP + phosphate + 5 H(+)(out). In terms of biological role, produces ATP from ADP in the presence of a proton gradient across the membrane. The alpha chain is a regulatory subunit. This chain is ATP synthase subunit alpha, found in Escherichia coli O81 (strain ED1a).